Here is a 211-residue protein sequence, read N- to C-terminus: Suppressor of RNA silencing p3 (211 aa).

The protein belongs to the tenuiviruses p3 protein family. Homodimer.

It is found in the host cytoplasm. Acts as a suppressor of RNA-mediated gene silencing, also known as post-transcriptional gene silencing (PTGS), presumably through the binding of dsRNA. This Avena sativa (Oat) protein is Suppressor of RNA silencing p3.